The sequence spans 527 residues: Cytokinin dehydrogenase 3 (527 aa).

The signal sequence occupies residues 1-22 (MEVAMVCTRVNLLILILSLCSP). The FAD-binding PCMH-type domain occupies 52 to 231 (LFHSPSAVLK…TRARILLQEA (180 aa)). A87, G89, and G91 together coordinate FAD. Pros-8alpha-FAD histidine is present on H92. 7 residues coordinate FAD: S93, Q97, D155, T160, S166, I170, and I221. An N-linked (GlcNAc...) asparagine glycan is attached at N413. The FAD site is built by Y471 and Q509.

The protein belongs to the oxygen-dependent FAD-linked oxidoreductase family. As to quaternary structure, monomer. FAD is required as a cofactor. In terms of tissue distribution, expressed in inflorescence meristems. Highly expressed in lamina joints, and mainly in the parenchyma cells and vascular bundles on the abaxial side of the lamina joint. Expressed in roots, stems, leaves and young panicles.

The protein localises to the endoplasmic reticulum. It catalyses the reaction N(6)-dimethylallyladenine + A + H2O = 3-methyl-2-butenal + adenine + AH2. Functionally, catalyzes the oxidation of cytokinins, a family of N(6)-substituted adenine derivatives, where the substituent is an isopentenyl group. Cytokinins are plant hormones essential for plant growth, development, and stress responses. Exhibits specific activities toward trans-zeatin (tZ) and isopentenyladenine (iP). Plays a role in lamina joint inclination. Regulates cell proliferation and vascular bundle number on the abaxial side of lamina joint. The polypeptide is Cytokinin dehydrogenase 3 (Oryza sativa subsp. japonica (Rice)).